The sequence spans 444 residues: MEQDSDLESGRATNQRPPRVRVRGAGVRGRGRVRRRALSEGQRRSLFRLDDLQLPDSLYVTRALQRDHALEMPRGQVDFSLIEAEERRAGPTDEWYFESVKTYRAKPGDDLQTLIKNYAKISLECGAVYEINSKIVVTGACYIIGNCAVLRANLPVGTAMFEVLNVDVIPSIGFMERIVFSNILFDCRSTTAVVCCISERNTLFHNCVFSGPHMLCLDIRAGAEVRGCHFVGAVCALRSKGLYSVRVRNSIFEKCAFGVVSGSKASISHSMFKDCACCIMLGGQGTIAHSHFMATTCTDTPMNLQLCTCEGNGSHVVPLGNIHFASNREAPWPTFNANVLVRVRLYMGRRRGVFHPKQSTFSMCVIAAPRGVVQRIYLFSVYDATCAILQLGEAGDAATERLCTCGMRHNTPSLRAAYVTDTRIDREINSQDTAEFFSSDEDNL.

The segment at 1–27 (MEQDSDLESGRATNQRPPRVRVRGAGV) is disordered. 2 positions are modified to phosphoserine: serine 438 and serine 439.

Belongs to the adenoviridae E1B 55 kDa protein family. As to quaternary structure, interacts with host PML-4 and PML-5; this interaction promotes efficient subnuclear targeting of E1B-55K to PML nuclear bodies. Interacts with E4-ORF3 protein. Interacts with E4-ORF6 protein.

The protein localises to the host nucleus. Its subcellular location is the host cytoplasm. Its function is as follows. Plays a major role to prevent cellular inhibition of viral genome replication. Assembles an SCF-like E3 ubiquitin ligase complex based on the cellular proteins ELOB, ELOC, CUL5 and RBX1, in cooperation with viral E4orf6. This viral RING-type ligase ubiquitinates cellular substrates and targets them to proteasomal degradation: TP53/p53, LIG4, MRE11-RAD50-NBS1 (MRN) complex, ITGA3, DAXX and BLM. E1B-55K probably acts as the substrate-specific adapter of the SCF-like E3 ubiquitin ligase complex. Degradation of host TP53/p53 activity is essential for preventing E1A-induced TP53 accumulation that would otherwise lead to cell apoptosis and growth arrest. E1B-55K also inactivates TP53 transcription-factor activity by binding its transactivation domain. E1B-55K also functions as a SUMO1 E3 ligase for TP53 which causes the latter to be sequestered in promyelocytic leukemia (PML) nuclear bodies thereby contributing to maximal inhibition of TP53 function. The protein is E1B 55 kDa protein of Canis lupus familiaris (Dog).